Reading from the N-terminus, the 244-residue chain is ATP-dependent Clp protease ATP-binding subunit CLPT4, chloroplastic (244 aa).

A chloroplast-targeting transit peptide spans 1–64 (MQALQASRLT…WRSSGRVITR (64 aa)). The span at 30-48 (SRPISSGVSSSQELSSRSS) shows a compositional bias: low complexity. Disordered stretches follow at residues 30-55 (SRPISSGVSSSQELSSRSSAPATKSW) and 220-244 (GRRYQLPDETEEAGPLKSEDDVSFL).

It belongs to the ClpA/ClpB family.

The protein resides in the plastid. Its subcellular location is the chloroplast. Accessory protein regulating the assembly of the plastid Clp protease system. This Chlamydomonas reinhardtii (Chlamydomonas smithii) protein is ATP-dependent Clp protease ATP-binding subunit CLPT4, chloroplastic.